The chain runs to 251 residues: Triosephosphate isomerase (251 aa).

A substrate-binding site is contributed by 9 to 11 (NWK). The active-site Electrophile is the H95. E167 serves as the catalytic Proton acceptor. Substrate is bound by residues G173, S212, and 233 to 234 (GG).

Belongs to the triosephosphate isomerase family. Homodimer.

The protein localises to the cytoplasm. It carries out the reaction D-glyceraldehyde 3-phosphate = dihydroxyacetone phosphate. It functions in the pathway carbohydrate biosynthesis; gluconeogenesis. It participates in carbohydrate degradation; glycolysis; D-glyceraldehyde 3-phosphate from glycerone phosphate: step 1/1. Functionally, involved in the gluconeogenesis. Catalyzes stereospecifically the conversion of dihydroxyacetone phosphate (DHAP) to D-glyceraldehyde-3-phosphate (G3P). In Pseudomonas putida (strain ATCC 700007 / DSM 6899 / JCM 31910 / BCRC 17059 / LMG 24140 / F1), this protein is Triosephosphate isomerase.